Consider the following 487-residue polypeptide: Pentatricopeptide repeat-containing protein At5g61370, mitochondrial (487 aa).

A mitochondrion-targeting transit peptide spans 1–90 (MMSTTVRLNR…TSPRRLLRFF (90 aa)). PPR repeat units follow at residues 137–171 (DKQT…SCPQ), 172–202 (DGFT…HKDV), 207–241 (ELSV…GITP), 242–283 (DLFC…KIQP), 284–318 (TSMS…GCDP), 319–353 (DTGS…GFRP), 354–388 (ERKF…SVGG), and 389–423 (YGQV…DVTL). The tract at residues 466 to 487 (TKPKLKLKPKRRSKTKKKNLQH) is disordered.

This sequence belongs to the PPR family. P subfamily.

The protein localises to the mitochondrion. This chain is Pentatricopeptide repeat-containing protein At5g61370, mitochondrial, found in Arabidopsis thaliana (Mouse-ear cress).